A 463-amino-acid chain; its full sequence is Altered inheritance of mitochondria protein 23, mitochondrial (463 aa).

The N-terminal 69 residues, 1–69, are a transit peptide targeting the mitochondrion; that stretch reads MKLHTRTLLA…TRFGNNNERY (69 aa). Disordered stretches follow at residues 25-124, 208-229, and 391-449; these read LNRP…NQKL, IHSS…GAST, and KKPT…KKLT. Polar residues predominate over residues 48 to 79; it reads QPRTGSNLSPRQTRFGNNNERYGSASGKQLGQ. Low complexity predominate over residues 94–114; sequence NHNNNSNNNNNGGYPSSNVNS. Residues 213–224 are compositionally biased toward basic and acidic residues; that stretch reads RKADSKTEDGAD. The segment covering 391 to 405 has biased composition (polar residues); the sequence is KKPTTGGTNSTSTIK. Basic and acidic residues-rich tracts occupy residues 406–423 and 440–449; these read QTDK…KEKL and PPAKEKKKLT.

The protein belongs to the AIM23 family.

The protein resides in the mitochondrion. The protein is Altered inheritance of mitochondria protein 23, mitochondrial (AIM23) of Lodderomyces elongisporus (strain ATCC 11503 / CBS 2605 / JCM 1781 / NBRC 1676 / NRRL YB-4239) (Yeast).